A 716-amino-acid chain; its full sequence is Antibacterial effector protein Tle3 (716 aa).

The disordered stretch occupies residues 68–87 (PTLPGGQANPGYLTPAGYSL).

Interacts in the cytoplasm with the adapter protein Tla3. Interacts in the periplasm with the immunity protein Tli3.

Its subcellular location is the secreted. The protein resides in the host periplasm. With respect to regulation, neutralized by the immunity protein Tli3 in the periplasm of P.aeruginosa cells. Its function is as follows. Antibacterial effector. Is toxic once delivered in the periplasm of prey bacteria. This Pseudomonas aeruginosa (strain ATCC 15692 / DSM 22644 / CIP 104116 / JCM 14847 / LMG 12228 / 1C / PRS 101 / PAO1) protein is Antibacterial effector protein Tle3.